The primary structure comprises 138 residues: MLRTMLKSKIHRATVTQADLHYVGSCTIDADLMEAADILEGEQIDIVDIDNGNRLTTYAITGDRGTGVIGINGAAARLISPGDLVIIIGYAQYSEEDLKNYASRVVFVDGNNKQVELGGDPAQVPDGSGLKNPRHPEA.

Ser-25 functions as the Schiff-base intermediate with substrate; via pyruvic acid in the catalytic mechanism. Ser-25 bears the Pyruvic acid (Ser) mark. Thr-57 is a binding site for substrate. Tyr-58 (proton donor) is an active-site residue. 73-75 (GAA) provides a ligand contact to substrate. The disordered stretch occupies residues 116–138 (ELGGDPAQVPDGSGLKNPRHPEA).

Belongs to the PanD family. Heterooctamer of four alpha and four beta subunits. Pyruvate serves as cofactor. Is synthesized initially as an inactive proenzyme, which is activated by self-cleavage at a specific serine bond to produce a beta-subunit with a hydroxyl group at its C-terminus and an alpha-subunit with a pyruvoyl group at its N-terminus.

It localises to the cytoplasm. It catalyses the reaction L-aspartate + H(+) = beta-alanine + CO2. Its pathway is cofactor biosynthesis; (R)-pantothenate biosynthesis; beta-alanine from L-aspartate: step 1/1. In terms of biological role, catalyzes the pyruvoyl-dependent decarboxylation of aspartate to produce beta-alanine. In Corynebacterium jeikeium (strain K411), this protein is Aspartate 1-decarboxylase.